A 103-amino-acid polypeptide reads, in one-letter code: MDKSKRPFLKSKRSFRRRLPPIGSGDRIDYRNMSLISRFISEQGKILSRRVNRLTLKQQRLITIAIKQARILSSLPFLNNEKQFERTEFTARTTGSRTINLNK.

This sequence belongs to the bacterial ribosomal protein bS18 family. In terms of assembly, part of the 30S ribosomal subunit.

It is found in the plastid. The protein resides in the chloroplast. This Buxus microphylla (Littleleaf boxwood) protein is Small ribosomal subunit protein bS18c.